Reading from the N-terminus, the 207-residue chain is Ankyrin repeat-containing protein P1E11.10 (207 aa).

ANK repeat units follow at residues 36–65 (NGYT…DINI) and 69–98 (DGET…TVKN).

The protein localises to the cytoplasm. It is found in the nucleus. This is Ankyrin repeat-containing protein P1E11.10 from Schizosaccharomyces pombe (strain 972 / ATCC 24843) (Fission yeast).